The primary structure comprises 84 residues: Large ribosomal subunit protein bL27 (84 aa).

Residues 1–22 (MAHKKAGGSTRNGRDSESKRLG) form a disordered region.

Belongs to the bacterial ribosomal protein bL27 family.

In Shewanella denitrificans (strain OS217 / ATCC BAA-1090 / DSM 15013), this protein is Large ribosomal subunit protein bL27.